Reading from the N-terminus, the 306-residue chain is Ornithine carbamoyltransferase (306 aa).

Residues 53-56 (STRT), Gln80, Arg104, and 131-134 (HPCQ) each bind carbamoyl phosphate. Residues Asn162, Asp219, and 223-224 (SM) each bind L-ornithine. Carbamoyl phosphate-binding positions include 259-260 (CL) and Arg287.

It belongs to the aspartate/ornithine carbamoyltransferase superfamily. OTCase family.

Its subcellular location is the cytoplasm. The catalysed reaction is carbamoyl phosphate + L-ornithine = L-citrulline + phosphate + H(+). The protein operates within amino-acid degradation; L-arginine degradation via ADI pathway; carbamoyl phosphate from L-arginine: step 2/2. Reversibly catalyzes the transfer of the carbamoyl group from carbamoyl phosphate (CP) to the N(epsilon) atom of ornithine (ORN) to produce L-citrulline. In Acinetobacter baumannii (strain AYE), this protein is Ornithine carbamoyltransferase.